Here is a 419-residue protein sequence, read N- to C-terminus: Serine--tRNA ligase (419 aa).

An L-serine-binding site is contributed by 226-228; that stretch reads TSE. ATP contacts are provided by residues 257–259 and Val273; that span reads RRE. Glu280 lines the L-serine pocket. 344-347 is an ATP binding site; it reads ELTS. An L-serine-binding site is contributed by Thr379.

The protein belongs to the class-II aminoacyl-tRNA synthetase family. Type-1 seryl-tRNA synthetase subfamily. Homodimer. The tRNA molecule binds across the dimer.

Its subcellular location is the cytoplasm. It carries out the reaction tRNA(Ser) + L-serine + ATP = L-seryl-tRNA(Ser) + AMP + diphosphate + H(+). It catalyses the reaction tRNA(Sec) + L-serine + ATP = L-seryl-tRNA(Sec) + AMP + diphosphate + H(+). It functions in the pathway aminoacyl-tRNA biosynthesis; selenocysteinyl-tRNA(Sec) biosynthesis; L-seryl-tRNA(Sec) from L-serine and tRNA(Sec): step 1/1. Its function is as follows. Catalyzes the attachment of serine to tRNA(Ser). Is also able to aminoacylate tRNA(Sec) with serine, to form the misacylated tRNA L-seryl-tRNA(Sec), which will be further converted into selenocysteinyl-tRNA(Sec). The protein is Serine--tRNA ligase of Corynebacterium diphtheriae (strain ATCC 700971 / NCTC 13129 / Biotype gravis).